The primary structure comprises 330 residues: MENNNQSFWQFSDQLRLQASNLANLSLNDSIWSNNYISKRRDERINFDIKVGGEINSFKSKDPACDYNDNVNGSLLAMPYNNNNNNNIILGFGGVGLNGGFNKGIYSKPAFANLNNNINLNINPKGHKGKVEDELFHPSKSSKKNNNLNKKHGDNNNNDNNKDSKAAGDKRFKTLPPSESLPRDETIGGYIFVCNNDTMAENLKRQLFGLPPRYRDSVRAITPGLPLFLYNYSTHQLHGIFEAASFGGTNIDPSAWEDKKCPGESRFPAQVRVITRKTCEPLEEDSFRPILHHYDGPKFRLELNVPEALSLLDIFAEQDTFNDAFEALPA.

The segment at 137–181 (HPSKSSKKNNNLNKKHGDNNNNDNNKDSKAAGDKRFKTLPPSESL) is disordered. Positions 160–172 (NNKDSKAAGDKRF) are enriched in basic and acidic residues. The region spanning 185-317 (ETIGGYIFVC…ALSLLDIFAE (133 aa)) is the DCD domain.

It is found in the cytoplasm. Its function is as follows. Involved in stress signaling pathway that mediates cell death in response to endoplasmic reticulum (ER) stress and osmotic stress. This chain is DCD domain-containing protein NRP-B, found in Glycine max (Soybean).